A 567-amino-acid polypeptide reads, in one-letter code: MANAPVQRMSKLMAKTLRDDPADAEVLSHKLLVRAGYVRRTAAGLWSWLPLGKKVLGNIERIVREEMDAIGAQEVQLPALLPREPYEATGRWQEYGPELFRLQDRKGGDYLLGPTHEEIFTLLVKDQASSYKDLPVILYQIQNKYRDEARPRAGILRGREFLMKDSYSFDVADEGLAESYALHRAAYQRIFERLGLDYRIVAATAGAMGGSKSEEFLAPAEAGEDTFADCPNCDYAANTEAITFRLTPVDATDVPAAEDIPTPDTPTIETLAASLGVEASATLKNLLVKVDGEIVAVGVPGDREVDMDKVEAHFAPAAVELVTAEDFVGRPDLVRGYVGPQGLGEKVTYIADPRVAPGTAWITGANKADTHAKNVVAGRDFEVDTYVDVVVVREGDPCPNCGTGLKLDRAIEIGHIFQLGRKYADALKLDVLGQNGKPARVTMGSYGIGVSRAVAALAEQHADDKGLVWSKEVAPADVHVVAAGKALQTELALEVSDKLAAAGVRVLVDDRAGVSPGVKFTDAELIGVPQILVAGRRSGEGVVELKDRRTGEREEVTVEEALTRLTS.

The protein belongs to the class-II aminoacyl-tRNA synthetase family. ProS type 1 subfamily. As to quaternary structure, homodimer.

It localises to the cytoplasm. The catalysed reaction is tRNA(Pro) + L-proline + ATP = L-prolyl-tRNA(Pro) + AMP + diphosphate. Functionally, catalyzes the attachment of proline to tRNA(Pro) in a two-step reaction: proline is first activated by ATP to form Pro-AMP and then transferred to the acceptor end of tRNA(Pro). As ProRS can inadvertently accommodate and process non-cognate amino acids such as alanine and cysteine, to avoid such errors it has two additional distinct editing activities against alanine. One activity is designated as 'pretransfer' editing and involves the tRNA(Pro)-independent hydrolysis of activated Ala-AMP. The other activity is designated 'posttransfer' editing and involves deacylation of mischarged Ala-tRNA(Pro). The misacylated Cys-tRNA(Pro) is not edited by ProRS. The polypeptide is Proline--tRNA ligase (Streptomyces coelicolor (strain ATCC BAA-471 / A3(2) / M145)).